A 1038-amino-acid chain; its full sequence is MAKVRVYELAKEFGVESKVVMAKLQELGEFVRSASSTIEAPVVRKLTDALQGPGGNAGKSAAKPGAPRKAAPAKPAAPSPAAAARPAAPKPGAPAPKPAEAPSSTPAAPSAPSAGPRPGPKPAPKAAPVTPVPAAEFSAPAPAQPAAPQPQAPRPAGATPGPRPTPARPAPAGGQRDGGRDGGQRDGGRGGERGGDRPARPAGQGAPRPGGARPAGPRPGNNPFTSGGSTGMARPSAPRPGGAPRPGGGQERPGAPRPQGSGPGGAPRPQGGQGQGGARPTPGGMPRPQAPRPGGGPAGNRPNPGMMPQRPAAGPRPGPGGGGRGPGGGGRPGAGGGGRPGGGGFAGRPGGGGGGGFAGRPAGPGGGGGAGRPGGGGGFGGRPGFGGRPGGPGGRGGTQGAFGRPGGPARRGRKSKRQRRQEYEAMQAPSVGGVMLPRGNGQAVRLSRGASLTDFAEKINANPASLVAVMMNLGEMVTATQSVSDETLRLLAEEMNYVLEIVSPEEEDRELLESFDIEFGEDEGGEEALVSRPPVVTVMGHVDHGKTRLLDAIRKTNVVAGEAGGITQHIGAYQVSSEVNGEDRKITFIDTPGHEAFTAMRARGAKSTDIAILVVAANDGVMPQTIEALNHAKAAEVPIVVAVNKIDVEGADPTKVRGQLTEFGLVAEEYGGDTMFVDISAKQGLNIEALLEAVVLTADASLDLRANPEQDAQGIAIESHLDRGRGAVSTVLVQRGTLRIGDTVVVGDAYGRVRAMLDDNGQNVQEAGPSTPVLVLGLTNVPGAGDNLLVVDEDRTARQIAEKRAARERNANFARKGVRFSLENLDEALKAGLVQELNLIIKGDASGSVEALESSLLQLDVGEEVDIRILHRGVGAVTESDINLATGSDAIVIGFNVRAAGRAEQMAEREGVDVRYYSVIYQAIEEIEAALKGLLKPEYEEVELGTAEIREIFRSSKLGNIAGVLVRSGEVKRNTKARLLRDGKVIAENLNISGLRRFKDDVTEIREGFEGGINLGNFNDIKIDDVIATYEMREKPRG.

Residues 48–426 (DALQGPGGNA…RQRRQEYEAM (379 aa)) are disordered. The span at 58–87 (GKSAAKPGAPRKAAPAKPAAPSPAAAARPA) shows a compositional bias: low complexity. The span at 88–99 (APKPGAPAPKPA) shows a compositional bias: pro residues. The span at 100–114 (EAPSSTPAAPSAPSA) shows a compositional bias: low complexity. Residues 115–125 (GPRPGPKPAPK) are compositionally biased toward pro residues. Residues 126–141 (AAPVTPVPAAEFSAPA) are compositionally biased toward low complexity. The segment covering 142-153 (PAQPAAPQPQAP) has biased composition (pro residues). A compositionally biased stretch (basic and acidic residues) spans 177-199 (DGGRDGGQRDGGRGGERGGDRPA). Residues 200–219 (RPAGQGAPRPGGARPAGPRP) are compositionally biased toward low complexity. Residues 261–277 (SGPGGAPRPQGGQGQGG) are compositionally biased toward gly residues. Positions 299-315 (GNRPNPGMMPQRPAAGP) are enriched in low complexity. Positions 319 to 406 (PGGGGRGPGG…GTQGAFGRPG (88 aa)) are enriched in gly residues. Positions 410–419 (RRGRKSKRQR) are enriched in basic residues. Residues 531–703 (SRPPVVTVMG…VVLTADASLD (173 aa)) form the tr-type G domain. The interval 540–547 (GHVDHGKT) is G1. Residue 540–547 (GHVDHGKT) participates in GTP binding. Residues 565 to 569 (GITQH) form a G2 region. Residues 590-593 (DTPG) form a G3 region. Residues 590–594 (DTPGH) and 644–647 (NKID) contribute to the GTP site. A G4 region spans residues 644–647 (NKID). The interval 680–682 (SAK) is G5.

This sequence belongs to the TRAFAC class translation factor GTPase superfamily. Classic translation factor GTPase family. IF-2 subfamily.

Its subcellular location is the cytoplasm. Its function is as follows. One of the essential components for the initiation of protein synthesis. Protects formylmethionyl-tRNA from spontaneous hydrolysis and promotes its binding to the 30S ribosomal subunits. Also involved in the hydrolysis of GTP during the formation of the 70S ribosomal complex. The chain is Translation initiation factor IF-2 from Streptomyces griseus subsp. griseus (strain JCM 4626 / CBS 651.72 / NBRC 13350 / KCC S-0626 / ISP 5235).